We begin with the raw amino-acid sequence, 182 residues long: Oligoribonuclease (182 aa).

In terms of domain architecture, Exonuclease spans 8–171 (LIWIDLEMTG…DDIRESIKEL (164 aa)). Residue tyrosine 129 is part of the active site.

Belongs to the oligoribonuclease family.

Its subcellular location is the cytoplasm. In terms of biological role, 3'-to-5' exoribonuclease specific for small oligoribonucleotides. The polypeptide is Oligoribonuclease (orn) (Haemophilus influenzae (strain ATCC 51907 / DSM 11121 / KW20 / Rd)).